Consider the following 378-residue polypeptide: MERGRMLVLDRKPLTPAWASPMRQALEGVQGYKAGMTLAEAARRTGLSAFSKLASNENLLGPSPKVAEAVMAAMAEPHIYPDPHSDVLRAAIGARLGVSPARVVVSPGSEALIDYVFRAVLHPGDSILLSSPTFPTYEIFGRCAEARIIDVPRLANFDIDVPAVCAAAALGPKLLVLCTPNNPTGNALKAADFQAILAATPRSTVVFVDEAYREYHEAFDTFAMLDAWGGPWVSARTFSKAYGLAGLRMGYGVASSPELVDYLDRIRPPFNVTAVSQAAALAAWEDQDYLKRTVDLTIAERGRVEAVLDDMGVEHTESHANFVFLRSPAGPEATAAHLLHQGLIIRPTPVAGGWVRITIGRPADNDALIAALPAALSL.

Lys-240 carries the post-translational modification N6-(pyridoxal phosphate)lysine.

It belongs to the class-II pyridoxal-phosphate-dependent aminotransferase family. Histidinol-phosphate aminotransferase subfamily. In terms of assembly, homodimer. Pyridoxal 5'-phosphate is required as a cofactor.

It carries out the reaction L-histidinol phosphate + 2-oxoglutarate = 3-(imidazol-4-yl)-2-oxopropyl phosphate + L-glutamate. It participates in amino-acid biosynthesis; L-histidine biosynthesis; L-histidine from 5-phospho-alpha-D-ribose 1-diphosphate: step 7/9. This is Histidinol-phosphate aminotransferase 2 (hisC2) from Caulobacter vibrioides (strain ATCC 19089 / CIP 103742 / CB 15) (Caulobacter crescentus).